Here is a 604-residue protein sequence, read N- to C-terminus: Aspartate--tRNA(Asp/Asn) ligase (604 aa).

Glu-175 contacts L-aspartate. Residues Gln-199–Lys-202 form an aspartate region. Positions 221 and 456 each coordinate L-aspartate. Arg-221–Glu-223 is an ATP binding site. An ATP-binding site is contributed by Glu-496. Residue Arg-503 coordinates L-aspartate. Gly-548–Arg-551 provides a ligand contact to ATP.

The protein belongs to the class-II aminoacyl-tRNA synthetase family. Type 1 subfamily. As to quaternary structure, homodimer.

The protein resides in the cytoplasm. The enzyme catalyses tRNA(Asx) + L-aspartate + ATP = L-aspartyl-tRNA(Asx) + AMP + diphosphate. Functionally, aspartyl-tRNA synthetase with relaxed tRNA specificity since it is able to aspartylate not only its cognate tRNA(Asp) but also tRNA(Asn). Reaction proceeds in two steps: L-aspartate is first activated by ATP to form Asp-AMP and then transferred to the acceptor end of tRNA(Asp/Asn). This Methylorubrum extorquens (strain CM4 / NCIMB 13688) (Methylobacterium extorquens) protein is Aspartate--tRNA(Asp/Asn) ligase.